Consider the following 514-residue polypeptide: ATP synthase subunit alpha (514 aa).

170-177 is an ATP binding site; the sequence is GDRQTGKT.

This sequence belongs to the ATPase alpha/beta chains family. As to quaternary structure, F-type ATPases have 2 components, CF(1) - the catalytic core - and CF(0) - the membrane proton channel. CF(1) has five subunits: alpha(3), beta(3), gamma(1), delta(1), epsilon(1). CF(0) has three main subunits: a(1), b(2) and c(9-12). The alpha and beta chains form an alternating ring which encloses part of the gamma chain. CF(1) is attached to CF(0) by a central stalk formed by the gamma and epsilon chains, while a peripheral stalk is formed by the delta and b chains.

It is found in the cell inner membrane. It carries out the reaction ATP + H2O + 4 H(+)(in) = ADP + phosphate + 5 H(+)(out). In terms of biological role, produces ATP from ADP in the presence of a proton gradient across the membrane. The alpha chain is a regulatory subunit. The chain is ATP synthase subunit alpha from Acinetobacter baumannii (strain AB307-0294).